The sequence spans 916 residues: MNMSLSRIVKAAPLRRTTLAMALGALGALGAAPAAHADWNNQSIIKAGERQHGIHIKQSDGAGVRTATGTTIKVSGRQAQGVLLENPAAELRFQNGSVTSSGQLFDEGVRRFLGTVTVKAGKLVADHATLANVSDTRDDDGIALYVAGEQAQASIADSTLQGAGGVRVERGANVTVQRSTIVDGGLHIGTLQPLQPEDLPPSRVVLGDTSVTAVPASGAPAAVSVFGANELTVDGGHITGGRAAGVAAMDGAIVHLQRATIRRGDAPAGGAVPGGAVPGGAVPGGFGPLLDGWYGVDVSDSTVDLAQSIVEAPQLGAAIRAGRGARVTVSGGSLSAPHGNVIETGGGARRFPPPASPLSITLQAGARAQGRALLYRVLPEPVKLTLAGGAQGQGDIVATELPPIPGASSGPLDVALASQARWTGATRAVDSLSIDNATWVMTDNSNVGALRLASDGSVDFQQPAEAGRFKVLMVDTLAGSGLFRMNVFADLGLSDKLVVMRDASGQHRLWVRNSGSEPASANTMLLVQTPRGSAATFTLANKDGKVDIGTYRYRLAANGNGQWSLVGAKAPPAPKPAPQPGPQPGPQPPQPPQPPQRQPEAPAPQPPAGRELSAAANAAVNTGGVGLASTLWYAESNALSKRLGELRLNPDAGGAWGRGFAQRQQLDNRAGRRFDQKVAGFELGADHAVAVAGGRWHLGGLAGYTRGDRGFTGDGGGHTDSVHVGGYATYIANSGFYLDATLRASRLENDFKVAGSDGYAVKGKYRTHGVGASLEAGRRFAHADGWFLEPQAELAVFRVGGGAYRAANGLRVRDEGGSSVLGRLGLEVGKRIELAGGRQVQPYIKASVLQEFDGAGTVRTNGIAHRTELRGTRAELGLGMAAALGRGHSLYASYEYSKGPKLAMPWTFHAGYRYSW.

An N-terminal signal peptide occupies residues 1–37 (MNMSLSRIVKAAPLRRTTLAMALGALGALGAAPAAHA). Residues 263 to 265 (RGD) carry the Cell attachment site; involved in adhesion to various eukaryotic cell lines motif. 3 tandem repeats follow at residues 269-273 (GGAVP), 274-278 (GGAVP), and 279-283 (GGAVP). The tract at residues 269–288 (GGAVPGGAVPGGAVPGGFGP) is 4 X 5 AA tandem repeats of G-G-A-V-P. A 4; approximate repeat occupies 284–288 (GGFGP). A disordered region spans residues 564–613 (SLVGAKAPPAPKPAPQPGPQPGPQPPQPPQPPQRQPEAPAPQPPAGRELS). Pro residues predominate over residues 571-607 (PPAPKPAPQPGPQPGPQPPQPPQPPQRQPEAPAPQPP). Positions 578 to 606 (PQPGPQPGPQPPQPPQPPQRQPEAPAPQP) are 6 X 3 AA repeats of P-Q-P. Residues 648–916 (LNPDAGGAWG…TFHAGYRYSW (269 aa)) enclose the Autotransporter domain. The Cell attachment site motif lies at 706-708 (RGD).

In terms of assembly, monomer.

It is found in the periplasm. The protein localises to the secreted. The protein resides in the cell surface. Its subcellular location is the cell outer membrane. Agglutinogen that binds to eukaryotic cells; a process mediated by the R-G-D sequence. Pertactin may have a role in bacterial adhesion, and thus play a role in virulence. May contribute to the disease state of whooping cough. The chain is Pertactin autotransporter (prn) from Bordetella bronchiseptica (strain ATCC BAA-588 / NCTC 13252 / RB50) (Alcaligenes bronchisepticus).